Consider the following 262-residue polypeptide: Cap-specific mRNA (nucleoside-2'-O-)-methyltransferase (262 aa).

The RrmJ-type SAM-dependent 2'-O-MTase domain occupies 34–226 (TRRPRCWRKL…ERYLICFNKL (193 aa)). Positions 67 and 140 each coordinate S-adenosyl-L-methionine. Lysine 180 serves as the catalytic Proton acceptor.

It catalyses the reaction a 5'-end (N(7)-methyl 5'-triphosphoguanosine)-ribonucleoside in mRNA + S-adenosyl-L-methionine = a 5'-end (N(7)-methyl 5'-triphosphoguanosine)-(2'-O-methyl-ribonucleoside) in mRNA + S-adenosyl-L-homocysteine + H(+). S-adenosyl-L-methionine-dependent methyltransferase that mediates mRNA cap 2'-O-ribose methylation to the 5'-cap structure of late viral transcripts. The sequence is that of Cap-specific mRNA (nucleoside-2'-O-)-methyltransferase from Lepidoptera (butterflies and moths).